The primary structure comprises 494 residues: DnaJ homolog subfamily C member 7 (494 aa).

A2 is modified (N-acetylalanine). TPR repeat units follow at residues 28–61 (AESFKEQGNAYYAKKDYNEAYNYYTKAIDMCPNN), 62–95 (ASYYGNRAATLMMLGRFREALGDAQQSVRLDDSF), 96–129 (VRGHLREGKCHLSLGNAMAACRSFQRALELDHKN), 142–175 (VMEYEKIAEVDFEKRDFRKVVFCMDRALEFAPAC), 210–243 (ADALYVRGLCLYYEDCIEKAVQFFVQALRMAPDH), 256–289 (LKAKKEDGNKAFKEGNYKLAYELYTEALGIDPNN), 294–327 (AKLYCNRGTVNSKLRQLEDAIEDCTNAVKLDDTY), and 328–361 (IKAYLRRAQCYMDTEQFEEAVRDYEKVYQTEKTK). Residues 381–451 (DYYKILGVDK…KKKTRYDSGQ (71 aa)) form the J domain. S393 is modified (phosphoserine).

In terms of assembly, associates with complexes containing chaperones HSP70 and HSP90. Interacts with the GAP domain of NF1. Interacts with HSP90AA1. Interacts with HSPA1A/B; the interaction is enhanced by ATP. Interacts with HSP90AB1. Interacts with PGR. Interacts with RAD9A; the interaction is interrupted by UV and heat shock treatments. Interacts with HUS1 and RAD1. Interacts with NR1I3; this complex may also include HSP90 Interacts with HSPA8. Widely expressed with high levels in liver, skeletal muscle, kidney and testis.

It localises to the cytoplasm. It is found in the nucleus. The protein resides in the cytoskeleton. Acts as a co-chaperone regulating the molecular chaperones HSP70 and HSP90 in folding of steroid receptors, such as the glucocorticoid receptor and the progesterone receptor. Proposed to act as a recycling chaperone by facilitating the return of chaperone substrates to early stages of chaperoning if further folding is required. In vitro, induces ATP-independent dissociation of HSP90 but not of HSP70 from the chaperone-substrate complexes. Recruits NR1I3 to the cytoplasm. This Mus musculus (Mouse) protein is DnaJ homolog subfamily C member 7 (Dnajc7).